A 119-amino-acid polypeptide reads, in one-letter code: Acidic phospholipase A2 CM-II (119 aa).

Tyr-25, Gly-27, and Gly-29 together coordinate Ca(2+). His-45 is an active-site residue. Position 46 (Asp-46) interacts with Ca(2+). Residue Asp-87 is part of the active site.

This sequence belongs to the phospholipase A2 family. Group II subfamily. D49 sub-subfamily. It depends on Ca(2+) as a cofactor. In terms of processing, contains 6 disulfide bonds. In terms of tissue distribution, expressed by the venom gland.

It localises to the secreted. It catalyses the reaction a 1,2-diacyl-sn-glycero-3-phosphocholine + H2O = a 1-acyl-sn-glycero-3-phosphocholine + a fatty acid + H(+). In terms of biological role, PLA2 catalyzes the calcium-dependent hydrolysis of the 2-acyl groups in 3-sn-phosphoglycerides. This Bitis nasicornis (Rhinoceros adder) protein is Acidic phospholipase A2 CM-II.